Here is a 280-residue protein sequence, read N- to C-terminus: Orotidine 5'-phosphate decarboxylase (280 aa).

K96 functions as the Proton donor in the catalytic mechanism.

The protein belongs to the OMP decarboxylase family. Type 2 subfamily.

It carries out the reaction orotidine 5'-phosphate + H(+) = UMP + CO2. The protein operates within pyrimidine metabolism; UMP biosynthesis via de novo pathway; UMP from orotate: step 2/2. The sequence is that of Orotidine 5'-phosphate decarboxylase from Parabacteroides distasonis (strain ATCC 8503 / DSM 20701 / CIP 104284 / JCM 5825 / NCTC 11152).